A 331-amino-acid polypeptide reads, in one-letter code: Cytosolic Fe-S cluster assembly factor CFD1 (331 aa).

An ATP-binding site is contributed by 25-32 (GKGGVGKS). Residues C211 and C214 each coordinate [4Fe-4S] cluster.

It belongs to the Mrp/NBP35 ATP-binding proteins family. NUBP2/CFD1 subfamily. In terms of assembly, heterotetramer of 2 NBP35 and 2 CFD1 chains. [4Fe-4S] cluster is required as a cofactor.

The protein resides in the cytoplasm. Component of the cytosolic iron-sulfur (Fe/S) protein assembly (CIA) machinery. Required for maturation of extramitochondrial Fe-S proteins. The NBP35-CFD1 heterotetramer forms a Fe-S scaffold complex, mediating the de novo assembly of an Fe-S cluster and its transfer to target apoproteins. This chain is Cytosolic Fe-S cluster assembly factor CFD1, found in Cryptococcus neoformans var. neoformans serotype D (strain B-3501A) (Filobasidiella neoformans).